The following is a 287-amino-acid chain: Probable endonuclease 4 (287 aa).

Residues His-69, His-109, Glu-144, Asp-178, His-181, His-215, Asp-228, His-230, and Glu-260 each contribute to the Zn(2+) site.

Belongs to the AP endonuclease 2 family. The cofactor is Zn(2+).

It carries out the reaction Endonucleolytic cleavage to 5'-phosphooligonucleotide end-products.. In terms of biological role, endonuclease IV plays a role in DNA repair. It cleaves phosphodiester bonds at apurinic or apyrimidinic (AP) sites, generating a 3'-hydroxyl group and a 5'-terminal sugar phosphate. The polypeptide is Probable endonuclease 4 (Thermotoga sp. (strain RQ2)).